We begin with the raw amino-acid sequence, 352 residues long: 3-isopropylmalate dehydrogenase (352 aa).

Substrate-binding residues include arginine 96, arginine 106, arginine 134, and aspartate 220. Aspartate 220, aspartate 244, and aspartate 248 together coordinate Mg(2+). Residue 277–289 participates in NAD(+) binding; it reads GSAPDIAGKNLAN.

This sequence belongs to the isocitrate and isopropylmalate dehydrogenases family. LeuB type 1 subfamily. In terms of assembly, homodimer. The cofactor is Mg(2+). Mn(2+) is required as a cofactor.

The protein resides in the cytoplasm. The enzyme catalyses (2R,3S)-3-isopropylmalate + NAD(+) = 4-methyl-2-oxopentanoate + CO2 + NADH. It functions in the pathway amino-acid biosynthesis; L-leucine biosynthesis; L-leucine from 3-methyl-2-oxobutanoate: step 3/4. Functionally, catalyzes the oxidation of 3-carboxy-2-hydroxy-4-methylpentanoate (3-isopropylmalate) to 3-carboxy-4-methyl-2-oxopentanoate. The product decarboxylates to 4-methyl-2 oxopentanoate. This is 3-isopropylmalate dehydrogenase from Desulfitobacterium hafniense (strain Y51).